Reading from the N-terminus, the 79-residue chain is Probable Fe(2+)-trafficking protein (79 aa).

It belongs to the Fe(2+)-trafficking protein family. In terms of assembly, monomer.

Its function is as follows. Could be a mediator in iron transactions between iron acquisition and iron-requiring processes, such as synthesis and/or repair of Fe-S clusters in biosynthetic enzymes. The chain is Probable Fe(2+)-trafficking protein from Blochmanniella floridana.